A 540-amino-acid chain; its full sequence is NADH-quinone oxidoreductase subunit N (540 aa).

Transmembrane regions (helical) follow at residues 24–44 (LSPMLIVFGVAVAGVLVEAFL), 54–74 (LVLALGGLTAAFVAVVLLAGT), 88–108 (PTLFLQGTILLISIPAILIIA), 158–178 (APGHTEVFPLTLFAVGGMLLF), 184–204 (LLTMFVALEVLSLPLYLLCGL), 219–239 (YFLLGAFSSAFFLFGVALLYG), 263–283 (ALIGTALLSVGLLFKIGAVPF), 295–315 (PTPITAFMAAATKVAAVGAML), 331–351 (PVMWGVAILTMVVGAVMAVTQ), 357–377 (MLAYSSVAHAGFILTGLVAAN), 385–405 (MFYLLAYGFSTLGAFAVVTLV), 428–448 (VGGVFALFLLAFAGIPLTSGF), 462–482 (GAVPLVLVGVVSSAIAAFFYV), and 505–525 (MFTAAAIAVGVVVTVVLGILP).

The protein belongs to the complex I subunit 2 family. As to quaternary structure, NDH-1 is composed of 14 different subunits. Subunits NuoA, H, J, K, L, M, N constitute the membrane sector of the complex.

Its subcellular location is the cell membrane. The enzyme catalyses a quinone + NADH + 5 H(+)(in) = a quinol + NAD(+) + 4 H(+)(out). NDH-1 shuttles electrons from NADH, via FMN and iron-sulfur (Fe-S) centers, to quinones in the respiratory chain. The immediate electron acceptor for the enzyme in this species is believed to be a menaquinone. Couples the redox reaction to proton translocation (for every two electrons transferred, four hydrogen ions are translocated across the cytoplasmic membrane), and thus conserves the redox energy in a proton gradient. The sequence is that of NADH-quinone oxidoreductase subunit N from Rhodococcus opacus (strain B4).